Consider the following 528-residue polypeptide: Peptide chain release factor 3 (528 aa).

A tr-type G domain is found at 11 to 279 (SDRRTFAIIS…GFVEWAPAPI (269 aa)). GTP contacts are provided by residues 20–27 (SHPDAGKT), 88–92 (DTPGH), and 142–145 (NKMD).

The protein belongs to the TRAFAC class translation factor GTPase superfamily. Classic translation factor GTPase family. PrfC subfamily.

It localises to the cytoplasm. Increases the formation of ribosomal termination complexes and stimulates activities of RF-1 and RF-2. It binds guanine nucleotides and has strong preference for UGA stop codons. It may interact directly with the ribosome. The stimulation of RF-1 and RF-2 is significantly reduced by GTP and GDP, but not by GMP. The protein is Peptide chain release factor 3 of Marinomonas sp. (strain MWYL1).